The primary structure comprises 343 residues: 3-dehydroquinate synthase (343 aa).

NAD(+)-binding positions include 61 to 66 (SGEKYK), 95 to 99 (GVISD), 119 to 120 (TT), K132, K141, and 159 to 162 (FLKT). Zn(2+)-binding residues include E174, H231, and H248.

It belongs to the sugar phosphate cyclases superfamily. Dehydroquinate synthase family. Co(2+) serves as cofactor. It depends on Zn(2+) as a cofactor. Requires NAD(+) as cofactor.

Its subcellular location is the cytoplasm. The catalysed reaction is 7-phospho-2-dehydro-3-deoxy-D-arabino-heptonate = 3-dehydroquinate + phosphate. It functions in the pathway metabolic intermediate biosynthesis; chorismate biosynthesis; chorismate from D-erythrose 4-phosphate and phosphoenolpyruvate: step 2/7. In terms of biological role, catalyzes the conversion of 3-deoxy-D-arabino-heptulosonate 7-phosphate (DAHP) to dehydroquinate (DHQ). The polypeptide is 3-dehydroquinate synthase (Helicobacter pylori (strain HPAG1)).